The following is a 474-amino-acid chain: tRNA-2-methylthio-N(6)-dimethylallyladenosine synthase (474 aa).

Positions 3–120 constitute an MTTase N-terminal domain; the sequence is KKLHIKTWGC…LPEMINHVQG (118 aa). Residues Cys-12, Cys-49, Cys-83, Cys-157, Cys-161, and Cys-164 each contribute to the [4Fe-4S] cluster site. The Radical SAM core domain maps to 143 to 375; sequence RAEGPTAFVS…QQRISQQAME (233 aa). Residues 378-441 form the TRAM domain; that stretch reads RKMVGTVQRV…ASSLRGILLR (64 aa).

The protein belongs to the methylthiotransferase family. MiaB subfamily. As to quaternary structure, monomer. [4Fe-4S] cluster is required as a cofactor.

It localises to the cytoplasm. It carries out the reaction N(6)-dimethylallyladenosine(37) in tRNA + (sulfur carrier)-SH + AH2 + 2 S-adenosyl-L-methionine = 2-methylsulfanyl-N(6)-dimethylallyladenosine(37) in tRNA + (sulfur carrier)-H + 5'-deoxyadenosine + L-methionine + A + S-adenosyl-L-homocysteine + 2 H(+). Functionally, catalyzes the methylthiolation of N6-(dimethylallyl)adenosine (i(6)A), leading to the formation of 2-methylthio-N6-(dimethylallyl)adenosine (ms(2)i(6)A) at position 37 in tRNAs that read codons beginning with uridine. The chain is tRNA-2-methylthio-N(6)-dimethylallyladenosine synthase from Yersinia pestis bv. Antiqua (strain Angola).